The chain runs to 78 residues: Probable [Fe-S]-dependent transcriptional repressor (78 aa).

Residues Cys-56, Cys-61, Cys-64, and Cys-70 each contribute to the iron-sulfur cluster site.

Belongs to the FeoC family.

Its function is as follows. May function as a transcriptional regulator that controls feoABC expression. This chain is Probable [Fe-S]-dependent transcriptional repressor, found in Citrobacter koseri (strain ATCC BAA-895 / CDC 4225-83 / SGSC4696).